Here is a 94-residue protein sequence, read N- to C-terminus: Large ribosomal subunit protein uL23 (94 aa).

It belongs to the universal ribosomal protein uL23 family. Part of the 50S ribosomal subunit. Contacts protein L29, and trigger factor when it is bound to the ribosome.

Functionally, one of the early assembly proteins it binds 23S rRNA. One of the proteins that surrounds the polypeptide exit tunnel on the outside of the ribosome. Forms the main docking site for trigger factor binding to the ribosome. The sequence is that of Large ribosomal subunit protein uL23 from Latilactobacillus sakei subsp. sakei (strain 23K) (Lactobacillus sakei subsp. sakei).